A 346-amino-acid polypeptide reads, in one-letter code: Small glutamine-rich tetratricopeptide repeat-containing protein 2 (346 aa).

4 TPR repeats span residues 102–135, 136–169, 170–203, and 205–229; these read AEDL…LPTN, AIYY…DPSY, FRGY…EGDN, and TEAM…EKTV. Residues 219–249 are disordered; that stretch reads VEQSLNLEKTVPEQSRDADVDASQGASAGGL. A compositionally biased stretch (basic and acidic residues) spans 228-237; it reads TVPEQSRDAD. Position 308 is a phosphothreonine (T308). The segment at 325-346 is disordered; sequence GNLFGGAGAQSTDETPDNENKQ.

It belongs to the SGT family. Interacts with HSC82, HSP104, MDY2, SSA1 and SSA2.

The protein localises to the cytoplasm. Co-chaperone that binds to the molecular chaperone Hsp70 (SSA1 and SSA2). Regulates Hsp70 ATPase activity. Required for recovery from heat shock. The polypeptide is Small glutamine-rich tetratricopeptide repeat-containing protein 2 (SGT2) (Saccharomyces cerevisiae (strain ATCC 204508 / S288c) (Baker's yeast)).